Reading from the N-terminus, the 336-residue chain is Phospho-N-acetylmuramoyl-pentapeptide-transferase (336 aa).

10 helical membrane-spanning segments follow: residues Met-1 to Leu-21, Ile-56 to Phe-76, Ile-78 to Trp-98, Cys-124 to Phe-144, Phe-148 to Ala-168, Gly-184 to Ala-204, Pro-210 to Leu-230, Val-239 to Leu-259, Phe-264 to Val-284, and Val-314 to Phe-334.

It belongs to the glycosyltransferase 4 family. MraY subfamily. Mg(2+) serves as cofactor.

It localises to the cell inner membrane. It catalyses the reaction UDP-N-acetyl-alpha-D-muramoyl-L-alanyl-gamma-D-glutamyl-meso-2,6-diaminopimeloyl-D-alanyl-D-alanine + di-trans,octa-cis-undecaprenyl phosphate = di-trans,octa-cis-undecaprenyl diphospho-N-acetyl-alpha-D-muramoyl-L-alanyl-D-glutamyl-meso-2,6-diaminopimeloyl-D-alanyl-D-alanine + UMP. It participates in cell wall biogenesis; peptidoglycan biosynthesis. Catalyzes the initial step of the lipid cycle reactions in the biosynthesis of the cell wall peptidoglycan: transfers peptidoglycan precursor phospho-MurNAc-pentapeptide from UDP-MurNAc-pentapeptide onto the lipid carrier undecaprenyl phosphate, yielding undecaprenyl-pyrophosphoryl-MurNAc-pentapeptide, known as lipid I. In Chlamydia trachomatis serovar L2b (strain UCH-1/proctitis), this protein is Phospho-N-acetylmuramoyl-pentapeptide-transferase.